A 309-amino-acid polypeptide reads, in one-letter code: Mitogen-activated protein kinase kinase 8 (309 aa).

The Protein kinase domain occupies 53–305 (LDRISVLGSG…ASQLLNHPFL (253 aa)). ATP contacts are provided by residues 59 to 67 (LGSGNGGTV) and lysine 82. Aspartate 167 functions as the Proton acceptor in the catalytic mechanism. A phosphoserine mark is found at serine 195 and serine 201. Position 205 is a phosphothreonine (threonine 205).

The protein belongs to the protein kinase superfamily. STE Ser/Thr protein kinase family. MAP kinase kinase subfamily. Phosphorylation at Ser-195 and Ser-201 by MAP kinase kinase kinases positively regulates kinase activity.

The enzyme catalyses L-seryl-[protein] + ATP = O-phospho-L-seryl-[protein] + ADP + H(+). It catalyses the reaction L-threonyl-[protein] + ATP = O-phospho-L-threonyl-[protein] + ADP + H(+). It carries out the reaction L-tyrosyl-[protein] + ATP = O-phospho-L-tyrosyl-[protein] + ADP + H(+). The protein is Mitogen-activated protein kinase kinase 8 (MKK8) of Arabidopsis thaliana (Mouse-ear cress).